The chain runs to 329 residues: DNA-directed RNA polymerase subunit alpha (329 aa).

The segment at 1-235 (MQGSVTEFLK…EQLDAFVDLR (235 aa)) is alpha N-terminal domain (alpha-NTD). The segment at 249–329 (FDPILLRPVD…NWPPASIAED (81 aa)) is alpha C-terminal domain (alpha-CTD).

The protein belongs to the RNA polymerase alpha chain family. As to quaternary structure, homodimer. The RNAP catalytic core consists of 2 alpha, 1 beta, 1 beta' and 1 omega subunit. When a sigma factor is associated with the core the holoenzyme is formed, which can initiate transcription.

The enzyme catalyses RNA(n) + a ribonucleoside 5'-triphosphate = RNA(n+1) + diphosphate. In terms of biological role, DNA-dependent RNA polymerase catalyzes the transcription of DNA into RNA using the four ribonucleoside triphosphates as substrates. This Actinobacillus succinogenes (strain ATCC 55618 / DSM 22257 / CCUG 43843 / 130Z) protein is DNA-directed RNA polymerase subunit alpha.